Reading from the N-terminus, the 77-residue chain is Membrane-associated ATPase epsilon chain (77 aa).

It to E.hirae NtpH. As to quaternary structure, sul-ATPase is composed of six (or maybe five) subunits: alpha, beta, delta, gamma, C (proteolipid), and possibly epsilon.

It carries out the reaction ATP + H2O + 4 H(+)(in) = ADP + phosphate + 5 H(+)(out). The polypeptide is Membrane-associated ATPase epsilon chain (atpE) (Sulfolobus acidocaldarius (strain ATCC 33909 / DSM 639 / JCM 8929 / NBRC 15157 / NCIMB 11770)).